The sequence spans 1307 residues: Cyclic nucleotide-gated channel beta-1 (1307 aa).

6 disordered regions span residues 1–101, 126–178, 193–262, 320–458, 470–625, and 648–681; these read MLGW…AQVA, QPVY…TEPS, LPQP…PGDP, DSCW…LDSC, LERA…SQNS, and EKLI…KPAE. The Cytoplasmic segment spans residues 1 to 720; it reads MLGWVQRVLP…SIDPLTNLMY (720 aa). A compositionally biased stretch (acidic residues) spans 43 to 59; sequence VQPEPEPEPEPAPEEAA. Over residues 165–174 the composition is skewed to basic and acidic residues; the sequence is GSDKTSKTQD. Residues 361 to 386 show a composition bias toward acidic residues; the sequence is QEEEEEEKEEKEEKEEEEEKEEEEKR. A compositionally biased stretch (basic and acidic residues) spans 387 to 406; the sequence is EEEKKKEKEEEKKEKEKEEK. Acidic residues-rich tracts occupy residues 407 to 451 and 483 to 518; these read EEKE…EEEP and LPEE…EEGE. A compositionally biased stretch (pro residues) spans 550-560; it reads TIPPPERPPVS. Residues 621 to 631 are calmodulin-binding CaM1; that stretch reads ASQNSAIINDR. The chain crosses the membrane as a helical span at residues 721-742; it reads ILWLFFVVLAWNWNCWLIPVRW. The Extracellular portion of the chain corresponds to 743–751; sequence AFPYQRADN. The chain crosses the membrane as a helical span at residues 752-773; that stretch reads IHLWLLMDYLCDFIYLLDITVF. Residues 774-788 lie on the Cytoplasmic side of the membrane; it reads QMRLQFVKGGDIITD. A helical membrane pass occupies residues 789–808; sequence KKEMRNNYLKSQRFKMDLLC. The Extracellular segment spans residues 809–824; sequence LLPLDFLYLKLGVNPL. The helical transmembrane segment at 825 to 837 threads the bilayer; the sequence is LRLPRCLKYMAFF. Topologically, residues 838–849 are cytoplasmic; the sequence is EFNNRLEAILSK. The helical transmembrane segment at 850–872 threads the bilayer; the sequence is AYVYRVIRTTAYLLYSLHLNSCL. Residues 850 to 949 form an ion conduction pathway region; the sequence is AYVYRVIRTT…IGQMRDVVGA (100 aa). Residues 873–895 are Extracellular-facing; that stretch reads YYWASAFQGIGSTHWVYDGVGNS. 2 helical membrane passes run 896 to 922 and 923 to 948; these read YIRC…LFEI and VFQL…DVVG. Over 949-1307 the chain is Cytoplasmic; that stretch reads AATAGQTYYR…MLEEKKEEVE (359 aa). Positions 952–1028 are C-linker; the sequence is AGQTYYRSCM…NIVSKVALFQ (77 aa). Positions 1026 to 1130 are cNMP-binding domain; that stretch reads LFQGCDRQMI…LDKKDLNEIL (105 aa). The interval 1032–1148 is cyclic nucleotide-binding domain; the sequence is RQMIFDMLKR…LLRKKARRML (117 aa). 5 residues coordinate 3',5'-cyclic GMP: G1093, E1094, S1096, R1106, and T1107. Residue R1106 coordinates 3',5'-cyclic AMP. Positions 1212-1218 are calmodulin-binding CaM2; that stretch reads QQQLLEQ. The segment covering 1214 to 1238 has biased composition (low complexity); the sequence is QLLEQAKSSQEAGGEEGSGATDQPA. The tract at residues 1214-1307 is disordered; that stretch reads QLLEQAKSSQ…MLEEKKEEVE (94 aa). Pro residues predominate over residues 1250–1261; it reads EPPAPSSPPPAS.

The protein belongs to the cyclic nucleotide-gated cation channel (TC 1.A.1.5) family. CNGB1 subfamily. The rod cyclic nucleotide-gated channel is a heterotetramer composed of CNGA1 and CNGB1 subunits with 3:1 stoichiometry. CNGA1:CNGB1 channel binds Ca(2+)-bound CALM1 via CaM1 and CaM2 regions of the CNGB1 subunit; this interaction modulates the affinity of the channel for cNMPs in response to intracellular Ca(2+) levels. As to quaternary structure, the olfactory cyclic nucleotide-gated channel is a heterotetramer composed of CNGA2, CNGA4 and CNGB1b subunits with 2:1:1 stoichiometry. In terms of tissue distribution, expressed in olfactory sensory cilia (at protein level).

It localises to the cell projection. Its subcellular location is the cilium membrane. It catalyses the reaction Ca(2+)(in) = Ca(2+)(out). It carries out the reaction Na(+)(in) = Na(+)(out). The catalysed reaction is K(+)(in) = K(+)(out). The enzyme catalyses NH4(+)(in) = NH4(+)(out). It catalyses the reaction Rb(+)(in) = Rb(+)(out). It carries out the reaction Li(+)(in) = Li(+)(out). The catalysed reaction is Cs(+)(in) = Cs(+)(out). In terms of biological role, pore-forming subunit of the rod cyclic nucleotide-gated channel. Mediates rod photoresponses at dim light converting transient changes in intracellular cGMP levels into electrical signals. In the dark, cGMP levels are high and keep the channel open enabling a steady inward current carried by Na(+) and Ca(2+) ions that leads to membrane depolarization and neurotransmitter release from synaptic terminals. Upon photon absorption cGMP levels decline leading to channel closure and membrane hyperpolarization that ultimately slows neurotransmitter release and signals the presence of light, the end point of the phototransduction cascade. Conducts cGMP- and cAMP-gated ion currents, with permeability for monovalent and divalent cations. The selectivity for Ca(2+) over Na(+) increases with cGMP concentrations, whereas the selectivity among monovalent ions is independent of the cGMP levels. Pore-forming subunit of the olfactory cyclic nucleotide-gated channel. Operates in the cilia of olfactory sensory neurons where chemical stimulation of the odorant is converted to an electrical signal. Mediates odorant-induced cAMP-dependent Ca(2+) influx triggering neuron depolarization. The rise of intracellular Ca(2+) levels potentiates the olfactory response by activating Ca(2+)-dependent Cl(-) channels, but it also serves as a negative feedback signal to desensitize the channel for rapid adaptation to odorants. The polypeptide is Cyclic nucleotide-gated channel beta-1 (Rattus norvegicus (Rat)).